A 152-amino-acid polypeptide reads, in one-letter code: UPF0225 protein YchJ (152 aa).

The protein belongs to the UPF0225 family.

This chain is UPF0225 protein YchJ, found in Escherichia coli O127:H6 (strain E2348/69 / EPEC).